Here is a 113-residue protein sequence, read N- to C-terminus: Nucleoid-associated protein Csac_1593 (113 aa).

Belongs to the YbaB/EbfC family. In terms of assembly, homodimer.

It localises to the cytoplasm. The protein localises to the nucleoid. Binds to DNA and alters its conformation. May be involved in regulation of gene expression, nucleoid organization and DNA protection. This chain is Nucleoid-associated protein Csac_1593, found in Caldicellulosiruptor saccharolyticus (strain ATCC 43494 / DSM 8903 / Tp8T 6331).